A 257-amino-acid polypeptide reads, in one-letter code: NH(3)-dependent NAD(+) synthetase (257 aa).

28-35 (GISGGVDS) is a binding site for ATP. Aspartate 34 provides a ligand contact to Mg(2+). Arginine 109 lines the deamido-NAD(+) pocket. Residue threonine 129 coordinates ATP. Residue glutamate 134 participates in Mg(2+) binding. Residues lysine 142 and aspartate 149 each contribute to the deamido-NAD(+) site. 2 residues coordinate ATP: lysine 158 and serine 180. 240-241 (HK) contacts deamido-NAD(+).

Belongs to the NAD synthetase family. Homodimer.

It carries out the reaction deamido-NAD(+) + NH4(+) + ATP = AMP + diphosphate + NAD(+) + H(+). Its pathway is cofactor biosynthesis; NAD(+) biosynthesis; NAD(+) from deamido-NAD(+) (ammonia route): step 1/1. Functionally, catalyzes the ATP-dependent amidation of deamido-NAD to form NAD. Uses ammonia as a nitrogen source. This chain is NH(3)-dependent NAD(+) synthetase, found in Pyrococcus horikoshii (strain ATCC 700860 / DSM 12428 / JCM 9974 / NBRC 100139 / OT-3).